Reading from the N-terminus, the 249-residue chain is Hydroxyacylglutathione hydrolase (249 aa).

7 residues coordinate Zn(2+): His54, His56, Asp58, His59, His113, Asp138, and His176.

This sequence belongs to the metallo-beta-lactamase superfamily. Glyoxalase II family. Monomer. Zn(2+) is required as a cofactor.

The catalysed reaction is an S-(2-hydroxyacyl)glutathione + H2O = a 2-hydroxy carboxylate + glutathione + H(+). Its pathway is secondary metabolite metabolism; methylglyoxal degradation; (R)-lactate from methylglyoxal: step 2/2. Thiolesterase that catalyzes the hydrolysis of S-D-lactoyl-glutathione to form glutathione and D-lactic acid. The sequence is that of Hydroxyacylglutathione hydrolase from Synechococcus sp. (strain CC9605).